The chain runs to 153 residues: Ubiquitin/ISG15-conjugating enzyme E2 L6 (153 aa).

In terms of domain architecture, UBC core spans 2–149 (TASKRVAKEL…AEEFTLQYGV (148 aa)). The Glycyl thioester intermediate role is filled by cysteine 86.

This sequence belongs to the ubiquitin-conjugating enzyme family. Interacts with RNF19A, RNF19B and RNF144B. Interacts with FLT3 (tyrosine phosphorylated). In terms of processing, ISGylated.

It carries out the reaction S-ubiquitinyl-[E1 ubiquitin-activating enzyme]-L-cysteine + [E2 ubiquitin-conjugating enzyme]-L-cysteine = [E1 ubiquitin-activating enzyme]-L-cysteine + S-ubiquitinyl-[E2 ubiquitin-conjugating enzyme]-L-cysteine.. The protein operates within protein modification; protein ubiquitination. In terms of biological role, catalyzes the covalent attachment of ubiquitin to other proteins. Functions in the E6/E6-AP-induced ubiquitination of p53/TP53. Promotes ubiquitination and subsequent proteasomal degradation of FLT3. In Rattus norvegicus (Rat), this protein is Ubiquitin/ISG15-conjugating enzyme E2 L6 (Ube2l6).